A 943-amino-acid chain; its full sequence is Isoleucine--tRNA ligase (943 aa).

A 'HIGH' region motif is present at residues 59 to 69 (PYANGQIHLGH). E577 provides a ligand contact to L-isoleucyl-5'-AMP. The 'KMSKS' region signature appears at 618–622 (KMSKS). Position 621 (K621) interacts with ATP. Zn(2+)-binding residues include C906, C909, C926, and C929.

The protein belongs to the class-I aminoacyl-tRNA synthetase family. IleS type 1 subfamily. In terms of assembly, monomer. Zn(2+) serves as cofactor.

The protein localises to the cytoplasm. It carries out the reaction tRNA(Ile) + L-isoleucine + ATP = L-isoleucyl-tRNA(Ile) + AMP + diphosphate. Its function is as follows. Catalyzes the attachment of isoleucine to tRNA(Ile). As IleRS can inadvertently accommodate and process structurally similar amino acids such as valine, to avoid such errors it has two additional distinct tRNA(Ile)-dependent editing activities. One activity is designated as 'pretransfer' editing and involves the hydrolysis of activated Val-AMP. The other activity is designated 'posttransfer' editing and involves deacylation of mischarged Val-tRNA(Ile). This chain is Isoleucine--tRNA ligase, found in Xylella fastidiosa (strain M23).